Consider the following 20-residue polypeptide: Dahlein-5.3 (20 aa).

Expressed by the skin dorsal glands.

Its subcellular location is the secreted. Functionally, has no antimicrobial activity. Strongly inhibits the formation of NO by neuronal nitric oxide synthase at micromolar concentrations. The sequence is that of Dahlein-5.3 from Ranoidea dahlii (Dahl's aquatic frog).